Reading from the N-terminus, the 170-residue chain is Adenine phosphoribosyltransferase (170 aa).

The protein belongs to the purine/pyrimidine phosphoribosyltransferase family. Homodimer.

The protein localises to the cytoplasm. It catalyses the reaction AMP + diphosphate = 5-phospho-alpha-D-ribose 1-diphosphate + adenine. Its pathway is purine metabolism; AMP biosynthesis via salvage pathway; AMP from adenine: step 1/1. Catalyzes a salvage reaction resulting in the formation of AMP, that is energically less costly than de novo synthesis. The chain is Adenine phosphoribosyltransferase from Mycoplasma capricolum subsp. capricolum (strain California kid / ATCC 27343 / NCTC 10154).